Reading from the N-terminus, the 407-residue chain is Phosphopentomutase (407 aa).

Positions 10, 306, 311, 347, 348, and 359 each coordinate Mn(2+).

It belongs to the phosphopentomutase family. Mn(2+) is required as a cofactor.

The protein resides in the cytoplasm. The catalysed reaction is 2-deoxy-alpha-D-ribose 1-phosphate = 2-deoxy-D-ribose 5-phosphate. It carries out the reaction alpha-D-ribose 1-phosphate = D-ribose 5-phosphate. Its pathway is carbohydrate degradation; 2-deoxy-D-ribose 1-phosphate degradation; D-glyceraldehyde 3-phosphate and acetaldehyde from 2-deoxy-alpha-D-ribose 1-phosphate: step 1/2. Functionally, isomerase that catalyzes the conversion of deoxy-ribose 1-phosphate (dRib-1-P) and ribose 1-phosphate (Rib-1-P) to deoxy-ribose 5-phosphate (dRib-5-P) and ribose 5-phosphate (Rib-5-P), respectively. This is Phosphopentomutase from Yersinia pseudotuberculosis serotype O:1b (strain IP 31758).